Reading from the N-terminus, the 150-residue chain is Large ribosomal subunit protein bL9 (150 aa).

Belongs to the bacterial ribosomal protein bL9 family.

Binds to the 23S rRNA. In Alteromonas mediterranea (strain DSM 17117 / CIP 110805 / LMG 28347 / Deep ecotype), this protein is Large ribosomal subunit protein bL9.